Here is a 319-residue protein sequence, read N- to C-terminus: Acetyl-coenzyme A carboxylase carboxyl transferase subunit alpha (319 aa).

Residues 35-296 (NIDEEVHRLR…KAQLLADLAD (262 aa)) enclose the CoA carboxyltransferase C-terminal domain.

It belongs to the AccA family. Acetyl-CoA carboxylase is a heterohexamer composed of biotin carboxyl carrier protein (AccB), biotin carboxylase (AccC) and two subunits each of ACCase subunit alpha (AccA) and ACCase subunit beta (AccD).

The protein resides in the cytoplasm. The catalysed reaction is N(6)-carboxybiotinyl-L-lysyl-[protein] + acetyl-CoA = N(6)-biotinyl-L-lysyl-[protein] + malonyl-CoA. It functions in the pathway lipid metabolism; malonyl-CoA biosynthesis; malonyl-CoA from acetyl-CoA: step 1/1. Its function is as follows. Component of the acetyl coenzyme A carboxylase (ACC) complex. First, biotin carboxylase catalyzes the carboxylation of biotin on its carrier protein (BCCP) and then the CO(2) group is transferred by the carboxyltransferase to acetyl-CoA to form malonyl-CoA. The polypeptide is Acetyl-coenzyme A carboxylase carboxyl transferase subunit alpha (Klebsiella pneumoniae subsp. pneumoniae (strain ATCC 700721 / MGH 78578)).